We begin with the raw amino-acid sequence, 99 residues long: Ribosomal processing cysteine protease Prp (99 aa).

Histidine 16 functions as the Proton donor in the catalytic mechanism. The active-site Nucleophile is the cysteine 28.

Belongs to the Prp family. As to quaternary structure, homodimer.

An essential cysteine protease that cleaves the N-terminus from ribosomal protein bL27. The polypeptide is Ribosomal processing cysteine protease Prp (Mycoplasma genitalium (strain ATCC 33530 / DSM 19775 / NCTC 10195 / G37) (Mycoplasmoides genitalium)).